The primary structure comprises 154 residues: Large ribosomal subunit protein uL23 (154 aa).

This sequence belongs to the universal ribosomal protein uL23 family.

Functionally, this protein binds to a specific region on the 26S rRNA. This is Large ribosomal subunit protein uL23 (RPL23A) from Fritillaria agrestis (Stinkbells).